The following is a 366-amino-acid chain: tRNA/tmRNA (uracil-C(5))-methyltransferase (366 aa).

The S-adenosyl-L-methionine site is built by Gln-189, Tyr-217, Asn-222, Glu-238, and Asp-298. The active-site Nucleophile is Cys-323. The active-site Proton acceptor is the Glu-357.

The protein belongs to the class I-like SAM-binding methyltransferase superfamily. RNA M5U methyltransferase family. TrmA subfamily.

The catalysed reaction is uridine(54) in tRNA + S-adenosyl-L-methionine = 5-methyluridine(54) in tRNA + S-adenosyl-L-homocysteine + H(+). It carries out the reaction uridine(341) in tmRNA + S-adenosyl-L-methionine = 5-methyluridine(341) in tmRNA + S-adenosyl-L-homocysteine + H(+). Functionally, dual-specificity methyltransferase that catalyzes the formation of 5-methyluridine at position 54 (m5U54) in all tRNAs, and that of position 341 (m5U341) in tmRNA (transfer-mRNA). This Idiomarina loihiensis (strain ATCC BAA-735 / DSM 15497 / L2-TR) protein is tRNA/tmRNA (uracil-C(5))-methyltransferase.